The sequence spans 247 residues: Phycobilisome rod-core linker polypeptide CpcG2 (247 aa).

A PBS-linker domain is found at Ser-11–Arg-189.

Belongs to the phycobilisome linker protein family. In terms of assembly, the phycobilisome is a hemidiscoidal structure that is composed of two distinct substructures: a core complex and a number of rods radiating from the core.

The protein resides in the cellular thylakoid membrane. In terms of biological role, rod-core linker protein required for attachment of phycocyanin to allophycocyanin in cores of phycobilisomes. Linker polypeptides determine the state of aggregation and the location of the disk-shaped phycobiliprotein units within the phycobilisome and modulate their spectroscopic properties in order to mediate a directed and optimal energy transfer. This Mastigocladus laminosus (Fischerella sp.) protein is Phycobilisome rod-core linker polypeptide CpcG2 (cpcG2).